A 144-amino-acid polypeptide reads, in one-letter code: D-aminoacyl-tRNA deacylase (144 aa).

The short motif at 136 to 137 (GP) is the Gly-cisPro motif, important for rejection of L-amino acids element.

It belongs to the DTD family. Homodimer.

It localises to the cytoplasm. It carries out the reaction glycyl-tRNA(Ala) + H2O = tRNA(Ala) + glycine + H(+). The enzyme catalyses a D-aminoacyl-tRNA + H2O = a tRNA + a D-alpha-amino acid + H(+). Its function is as follows. An aminoacyl-tRNA editing enzyme that deacylates mischarged D-aminoacyl-tRNAs. Also deacylates mischarged glycyl-tRNA(Ala), protecting cells against glycine mischarging by AlaRS. Acts via tRNA-based rather than protein-based catalysis; rejects L-amino acids rather than detecting D-amino acids in the active site. By recycling D-aminoacyl-tRNA to D-amino acids and free tRNA molecules, this enzyme counteracts the toxicity associated with the formation of D-aminoacyl-tRNA entities in vivo and helps enforce protein L-homochirality. This is D-aminoacyl-tRNA deacylase from Haemophilus influenzae (strain 86-028NP).